The following is a 391-amino-acid chain: Probable sugar efflux transporter (391 aa).

The next 12 helical transmembrane spans lie at 16 to 36 (VFVF…PVAL), 51 to 71 (VGLM…PLML), 82 to 102 (LLFL…AWNF), 110 to 130 (MGIA…VIRV), 138 to 158 (QALG…LPLG), 170 to 190 (TFGV…KLLP), 210 to 230 (PLLV…FTTY), 247 to 267 (ITTL…FLFG), 277 to 297 (FIAF…VFKN), 300 to 320 (WVIF…TIAL), 338 to 358 (IFSG…SIVI), and 361 to 381 (LGLE…LFWL).

It belongs to the major facilitator superfamily. SotB (TC 2.A.1.2) family.

It localises to the cell inner membrane. Its function is as follows. Involved in the efflux of sugars. The physiological role may be the reduction of the intracellular concentration of toxic sugars or sugar metabolites. This is Probable sugar efflux transporter from Helicobacter pylori (strain J99 / ATCC 700824) (Campylobacter pylori J99).